The primary structure comprises 239 residues: MATPHISAAPGDFADVVLMPGDPLRARYISDRFLEGAREVTSVRNMLGFTGTFRGRRVSVMGHGMGVPSISIYATELIKTYGVRVIIRVGSCGALSTDVKVREVIVATGAGTDSNVNRMRLMGHDFAAVADFTLARRAMEAAERRNKPVRAGPVFTSDLFYHPQEQLNATLARMGVLAVEMEVAGLYGVAAESGARALGLLTVSDHIITGESLTPQERQTTFDEMIELALDVAHAEPTP.

Histidine 5 is a binding site for a purine D-ribonucleoside. Phosphate contacts are provided by residues glycine 21, arginine 25, arginine 44, and 88 to 91; that span reads RVGS. Residues 180 to 182 and 204 to 205 each bind a purine D-ribonucleoside; these read EME and SD. The Proton donor role is filled by aspartate 205.

Belongs to the PNP/UDP phosphorylase family. In terms of assembly, homohexamer; trimer of homodimers.

It catalyses the reaction a purine D-ribonucleoside + phosphate = a purine nucleobase + alpha-D-ribose 1-phosphate. It carries out the reaction a purine 2'-deoxy-D-ribonucleoside + phosphate = a purine nucleobase + 2-deoxy-alpha-D-ribose 1-phosphate. Catalyzes the reversible phosphorolytic breakdown of the N-glycosidic bond in the beta-(deoxy)ribonucleoside molecules, with the formation of the corresponding free purine bases and pentose-1-phosphate. The sequence is that of Purine nucleoside phosphorylase DeoD-type from Myxococcus xanthus (strain DK1622).